Consider the following 432-residue polypeptide: Glycerophosphocholine acyltransferase 1 (432 aa).

At 1–110 (MYKLDNNDID…DSIFFKNSSR (110 aa)) the chain is on the cytoplasmic side. The residue at position 78 (Ser-78) is a Phosphoserine. The chain crosses the membrane as a helical span at residues 111–131 (LEKAFYPFTLFNIFFIGFLMG). A topological domain (lumenal) is located at residue Arg-132. The chain crosses the membrane as a helical span at residues 133 to 153 (FPEWFHVYYTILFFVLMPIRF). Over 154 to 162 (YTYYKTKNH) the chain is Cytoplasmic. A helical membrane pass occupies residues 163-183 (YFLADFCYFVNMLCLLFIWIF). Residues 184 to 187 (PYSY) lie on the Lumenal side of the membrane. A helical transmembrane segment spans residues 188-208 (SLFQSCFAFTFGTLCFAVITW). The Cytoplasmic segment spans residues 209–221 (RNSLVIHSIDKTT). The chain crosses the membrane as a helical span at residues 222–242 (SCFIHIIPPCVMYVIYHGLPL). Residues 243–263 (EYKIERFPGAIIQSELDIKKN) are Lumenal-facing. The helical transmembrane segment at 264-284 (ILWTSLYYLVWQSLYHYFITL) threads the bilayer. Residues 285-318 (KKSSKIKSGERMTSFEYLTTHQFKNFWAVKLRSP) lie on the Cytoplasmic side of the membrane. A helical membrane pass occupies residues 319–339 (WPMIIYTLSQYFYQLFTMLLC). Over 340–346 (GIWIRYK) the chain is Lumenal. A helical transmembrane segment spans residues 347–369 (LAAALFLTIVFLWASHNGATYYI). At 370 to 432 (DHYGKNFEKE…DSSSVSSKSD (63 aa)) the chain is on the cytoplasmic side. A disordered region spans residues 413–432 (LNVNRDEDFDDSSSVSSKSD).

Belongs to the GPC1 family.

It is found in the membrane. It carries out the reaction sn-glycerol 3-phosphocholine + an acyl-CoA = a 1-acyl-sn-glycero-3-phosphocholine + CoA. The enzyme catalyses sn-glycero-3-phosphoethanolamine + an acyl-CoA = a monoacyl-sn-glycero-3-phosphoethanolamine + CoA. The catalysed reaction is sn-glycero-3-phosphoethanolamine + (9Z)-octadecenoyl-CoA = (9Z-octadecenoyl)-sn-glycero-3-phosphoethanolamine + CoA. It catalyses the reaction sn-glycerol 3-phosphocholine + hexadecanoyl-CoA = hexadecanoyl-sn-glycero-3-phosphocholine + CoA. It carries out the reaction (9Z,12Z)-octadecadienoyl-CoA + sn-glycerol 3-phosphocholine = (9Z,12Z-octadecadienoyl)-sn-glycero-3-phosphocholine + CoA. The enzyme catalyses (12R)-hydroxy-(9Z)-octadecenoyl-CoA + sn-glycerol 3-phosphocholine = (12R-hydroxy-9Z-octadecenoyl)-sn-glycero-3-phosphocholine + CoA. The catalysed reaction is (9Z,12Z,15Z)-octadecatrienoyl-CoA + sn-glycerol 3-phosphocholine = (9Z,12Z,15Z-octadecatrienoyl)-sn-glycero-3-phosphocholine + CoA. It catalyses the reaction sn-glycerol 3-phosphocholine + (9Z)-octadecenoyl-CoA = (9Z-octadecenoyl)-sn-glycero-3-phosphocholine + CoA. It carries out the reaction 1-(9Z-octadecenoyl)-sn-glycero-3-phosphoethanolamine + sn-glycerol 3-phosphocholine = (9Z-octadecenoyl)-sn-glycero-3-phosphocholine + sn-glycero-3-phosphoethanolamine. The GPCAT activity is sensitive to N-ethylmaleimide, phenanthroline, and divalent cations including Ca(2+), Mg(2+), Mn(2+) and Zn(2+). The activity is also inhibited by glycerol-3-phosphate (G3P). Functionally, glycerophosphocholine acyltransferase (GPCAT) that utilizes acyl-CoA to acylate glycero-3-phosphocholine (GPC), forming lysophosphatidylcholine (LPC). Shows broad acyl specificities with a preference for 16:0-CoA, polyunsaturated acyl-CoA, and the hydroxylated ricinoleoyl-CoA. Also catalyzes the acylation of glycero-3-phosphoethanolamine (GPE) with acyl-CoA. In addition to acyl-CoA, GPCAT efficiently utilizes LPC and lysophosphatidylethanolamine (LPE) as acyl donors in the acylation of GPC. Contributes to the maintenance of phosphatidylcholine (PC) homeostasis and might also have specific functions in acyl editing of PC, such as transferring acyl groups modified at the sn-2 position of PC to the sn-1. Involved in postsynthetic PC remodeling that produces more saturated PC species. The sequence is that of Glycerophosphocholine acyltransferase 1 from Saccharomyces cerevisiae (strain ATCC 204508 / S288c) (Baker's yeast).